The following is a 747-amino-acid chain: MEERCESTESPQGQGRKNTKCGWLRKQGGFVKTWHTRWFVLKGDQLYYFKDEDETKPLGTIFLHGNKVIEHPCNEENPGKFLFDVVPGGERDRMTANHESYLLMASTQNDMEDWVKSIRRVIWGPFGGGIFGQKLEDTVRYEKRYGNRLAPMLVEQCVDFIRQRGLKEEGLFRLPGQANLVKELQDAFDCGEKPSFDSNTDVHTVASLLKLYLRELPEPVVPYAKYEDFLSCATLLSKEEEAGVKELMKQVKSLPVVNYNLLKYICRFLDEVQSYSGVNKMSAQNLATVFGPNILRPKVEDPLTIMEGTVVVQQLMSVMISKHDRLFPKDTEPQSKPQDGPNSNNNDGHKKATMGQLQNKENNNTKESPVRRCSWDKPESPQRSSVDNGSPTALSGSKTNSPRNSIHKLDISRSPPLMVKKNPAFNKGSGIVTNGSFSSSNAEGVEKPQTTPNGSLQARRTSSLKSSGTKMGTHSVQNGTVRMGILNTDTLGNSLNGRSMSWLPNGYVTLRDNKQKEPAGESGQHNRLSTYDNVHQQFSSMSLDDKHSVDSATWSTSSCEISLPENSNSCRSSTTTCPEQDFYVGNFEDPVLDGPPQDDLSHPGDYENKSDRRSVGGRSSRATSSSDNSETFVGNTSSNHSALHSLVSSLKQEMTKQKIEYESRIKSLEQRNLTLETEMLSLHDELDQERKKFTMIEIKMRNAERAKEDAEKRNDMLQKEMEQFFSTFGDLTVEPRRSERGNTIWIQ.

Disordered stretches follow at residues 1–20 and 327–475; these read MEERCESTESPQGQGRKNTK and FPKD…GTHS. The 107-residue stretch at 17–123 folds into the PH domain; it reads KNTKCGWLRK…WVKSIRRVIW (107 aa). The 195-residue stretch at 133-327 folds into the Rho-GAP domain; it reads QKLEDTVRYE…VMISKHDRLF (195 aa). Composition is skewed to polar residues over residues 334–346 and 355–367; these read QSKPQDGPNSNNN and GQLQNKENNNTKE. A phosphoserine mark is found at serine 368, serine 390, serine 395, serine 397, serine 401, serine 412, serine 414, and serine 436. The span at 368 to 380 shows a compositional bias: basic and acidic residues; sequence SPVRRCSWDKPES. The span at 381-404 shows a compositional bias: polar residues; that stretch reads PQRSSVDNGSPTALSGSKTNSPRN. Polar residues predominate over residues 431 to 475; it reads IVTNGSFSSSNAEGVEKPQTTPNGSLQARRTSSLKSSGTKMGTHS. Threonine 451 carries the post-translational modification Phosphothreonine. Serine 494 carries the phosphoserine modification. The segment at 581 to 639 is disordered; it reads DFYVGNFEDPVLDGPPQDDLSHPGDYENKSDRRSVGGRSSRATSSSDNSETFVGNTSSN. Over residues 599 to 614 the composition is skewed to basic and acidic residues; that stretch reads DLSHPGDYENKSDRRS. Low complexity predominate over residues 616–629; it reads GGRSSRATSSSDNS. A compositionally biased stretch (polar residues) spans 630–639; it reads ETFVGNTSSN. A coiled-coil region spans residues 648-728; the sequence is SSLKQEMTKQ…KEMEQFFSTF (81 aa).

Interacts with FLNA. Post-translationally, phosphorylated by ROCK, leading to activate the RacGAP activity.

Its subcellular location is the cytoplasm. The protein localises to the cytoskeleton. The protein resides in the cell junction. It is found in the adherens junction. It localises to the focal adhesion. Its subcellular location is the cell projection. Functionally, rho GTPase-activating protein involved in cell polarity, cell morphology and cytoskeletal organization. Acts as a GTPase activator for the Rac-type GTPase by converting it to an inactive GDP-bound state. Controls actin remodeling by inactivating Rac downstream of Rho leading to suppress leading edge protrusion and promotes cell retraction to achieve cellular polarity. Able to suppress RAC1 and CDC42 activity in vitro. Overexpression induces cell rounding with partial or complete disruption of actin stress fibers and formation of membrane ruffles, lamellipodia, and filopodia. Isoform 2 is a vascular cell-specific GAP involved in modulation of angiogenesis. In Mus musculus (Mouse), this protein is Rho GTPase-activating protein 24 (Arhgap24).